A 341-amino-acid polypeptide reads, in one-letter code: Phosphoribosylformylglycinamidine cyclo-ligase (341 aa).

It belongs to the AIR synthase family.

The protein resides in the cytoplasm. It carries out the reaction 2-formamido-N(1)-(5-O-phospho-beta-D-ribosyl)acetamidine + ATP = 5-amino-1-(5-phospho-beta-D-ribosyl)imidazole + ADP + phosphate + H(+). The protein operates within purine metabolism; IMP biosynthesis via de novo pathway; 5-amino-1-(5-phospho-D-ribosyl)imidazole from N(2)-formyl-N(1)-(5-phospho-D-ribosyl)glycinamide: step 2/2. The polypeptide is Phosphoribosylformylglycinamidine cyclo-ligase (Synechocystis sp. (strain ATCC 27184 / PCC 6803 / Kazusa)).